Here is a 202-residue protein sequence, read N- to C-terminus: MAIWRGSEPLILASQSRVRQLLLANAGLPFETMPAAIDERAVQRSSGLTTAGEIAVRLACEKAREVSSRSPGRYVIGADQTLECDGRLLNKPAGRADAGAHLRALSGRTHALHAGVAVVRDGRLMFENVSVARMTMRELSEDTIESYLDAAGDAASASVGAYQLEGLGIHLFSRIEGDHFTILGLPLLPLLAYLRSQWLLSL.

Residue D79 is the Proton acceptor of the active site.

Belongs to the Maf family. A divalent metal cation serves as cofactor.

The protein localises to the cytoplasm. It catalyses the reaction a ribonucleoside 5'-triphosphate + H2O = a ribonucleoside 5'-phosphate + diphosphate + H(+). The catalysed reaction is a 2'-deoxyribonucleoside 5'-triphosphate + H2O = a 2'-deoxyribonucleoside 5'-phosphate + diphosphate + H(+). In terms of biological role, nucleoside triphosphate pyrophosphatase. May have a dual role in cell division arrest and in preventing the incorporation of modified nucleotides into cellular nucleic acids. In Nitrobacter winogradskyi (strain ATCC 25391 / DSM 10237 / CIP 104748 / NCIMB 11846 / Nb-255), this protein is Nucleoside triphosphate pyrophosphatase.